Here is a 723-residue protein sequence, read N- to C-terminus: Fatty acid oxidation complex subunit alpha (723 aa).

An enoyl-CoA hydratase/isomerase region spans residues 1 to 189 (MIYQAETLQV…KIGLLDAVVD (189 aa)). Asp296 is a substrate binding site. Residues 311-723 (NKETQRAAVL…FYGAQQQGSI (413 aa)) form a 3-hydroxyacyl-CoA dehydrogenase region. Residues Met325, Asp344, 401–403 (VVE), Lys408, and Ser430 each bind NAD(+). His451 serves as the catalytic For 3-hydroxyacyl-CoA dehydrogenase activity. Asn454 serves as a coordination point for NAD(+). The substrate site is built by Asn501 and Tyr661.

It in the N-terminal section; belongs to the enoyl-CoA hydratase/isomerase family. This sequence in the C-terminal section; belongs to the 3-hydroxyacyl-CoA dehydrogenase family. Heterotetramer of two alpha chains (FadB) and two beta chains (FadA).

It catalyses the reaction a (3S)-3-hydroxyacyl-CoA + NAD(+) = a 3-oxoacyl-CoA + NADH + H(+). The enzyme catalyses a (3S)-3-hydroxyacyl-CoA = a (2E)-enoyl-CoA + H2O. The catalysed reaction is a 4-saturated-(3S)-3-hydroxyacyl-CoA = a (3E)-enoyl-CoA + H2O. It carries out the reaction (3S)-3-hydroxybutanoyl-CoA = (3R)-3-hydroxybutanoyl-CoA. It catalyses the reaction a (3Z)-enoyl-CoA = a 4-saturated (2E)-enoyl-CoA. The enzyme catalyses a (3E)-enoyl-CoA = a 4-saturated (2E)-enoyl-CoA. It functions in the pathway lipid metabolism; fatty acid beta-oxidation. Involved in the aerobic and anaerobic degradation of long-chain fatty acids via beta-oxidation cycle. Catalyzes the formation of 3-oxoacyl-CoA from enoyl-CoA via L-3-hydroxyacyl-CoA. It can also use D-3-hydroxyacyl-CoA and cis-3-enoyl-CoA as substrate. In Vibrio vulnificus (strain CMCP6), this protein is Fatty acid oxidation complex subunit alpha.